The following is a 259-amino-acid chain: Acetylglutamate kinase (259 aa).

Substrate is bound by residues 45-46, R67, and N159; that span reads GG.

It belongs to the acetylglutamate kinase family. ArgB subfamily.

Its subcellular location is the cytoplasm. The catalysed reaction is N-acetyl-L-glutamate + ATP = N-acetyl-L-glutamyl 5-phosphate + ADP. It functions in the pathway amino-acid biosynthesis; L-arginine biosynthesis; N(2)-acetyl-L-ornithine from L-glutamate: step 2/4. Catalyzes the ATP-dependent phosphorylation of N-acetyl-L-glutamate. The chain is Acetylglutamate kinase from Aeromonas salmonicida (strain A449).